The primary structure comprises 408 residues: Peptidase T (408 aa).

Residue histidine 78 coordinates Zn(2+). Aspartate 80 is an active-site residue. Aspartate 140 lines the Zn(2+) pocket. Glutamate 173 functions as the Proton acceptor in the catalytic mechanism. Zn(2+) is bound by residues glutamate 174, aspartate 196, and histidine 379.

The protein belongs to the peptidase M20B family. Zn(2+) is required as a cofactor.

It localises to the cytoplasm. It carries out the reaction Release of the N-terminal residue from a tripeptide.. Cleaves the N-terminal amino acid of tripeptides. This is Peptidase T from Escherichia coli O9:H4 (strain HS).